The sequence spans 418 residues: MEESESQAPVPPHGISLVSSPVRAVIRIRRKIRTMKKSRLQVDLTGERSLDSAKASLRRQISMDRASLFKSSTYEKQQYFNFDTPTLEKLALTSQIRKRNRNKSRHVLYPGNVRKCLPVEQKSKAKRCLLLFVGIVCFQIFNAIENLDDNLQKYDLDGLEKTLQREVFGQTRAIEKLMDHLKDYLATHYHNKPLVLSFNGPSGVGKSHTGRLLAKHFRSVVDNDFVLQYYTNHNCPNESDVIQCQAEVSAMISQMISRAEIEEKIPVFLFDEVEAMPVALLDVLHSYFQLNQSNEYLNVVYILISNIGGHEITKFVLQNVSNDFFNLPQELHQIVLSSLRKHHSLWDVAEIVPFTLLEKRHILDCFLDELLREGFYPDHSNIESLAGQLRYYIKGNKEFSISGCKQVVAKVNLLQPYT.

A helical membrane pass occupies residues 128–144; that stretch reads CLLLFVGIVCFQIFNAI. Position 200–207 (200–207) interacts with ATP; sequence GPSGVGKS.

The protein belongs to the ClpA/ClpB family. Torsin subfamily.

Its subcellular location is the membrane. The chain is Torsin-4A-B (tor4a-b) from Xenopus laevis (African clawed frog).